The sequence spans 310 residues: Proline iminopeptidase (310 aa).

An AB hydrolase-1 domain is found at 33-290 (PVIFLHGGPG…RVVQAGHRAF (258 aa)). Ser-107 acts as the Nucleophile in catalysis. Asp-260 is an active-site residue. His-287 (proton donor) is an active-site residue.

Belongs to the peptidase S33 family.

The protein resides in the cytoplasm. It catalyses the reaction Release of N-terminal proline from a peptide.. Specifically catalyzes the removal of N-terminal proline residues from peptides. The protein is Proline iminopeptidase (pip) of Neisseria meningitidis serogroup B (strain ATCC BAA-335 / MC58).